Reading from the N-terminus, the 253-residue chain is tRNA (guanine-N(1)-)-methyltransferase (253 aa).

Residues Gly110 and 130 to 135 each bind S-adenosyl-L-methionine; that span reads IGDYIL.

The protein belongs to the RNA methyltransferase TrmD family. In terms of assembly, homodimer.

Its subcellular location is the cytoplasm. The enzyme catalyses guanosine(37) in tRNA + S-adenosyl-L-methionine = N(1)-methylguanosine(37) in tRNA + S-adenosyl-L-homocysteine + H(+). In terms of biological role, specifically methylates guanosine-37 in various tRNAs. This Carboxydothermus hydrogenoformans (strain ATCC BAA-161 / DSM 6008 / Z-2901) protein is tRNA (guanine-N(1)-)-methyltransferase.